The sequence spans 179 residues: Shikimate kinase (179 aa).

22-27 (GTGKSS) lines the ATP pocket. S26 contributes to the Mg(2+) binding site. Residues D44, R68, and G90 each coordinate substrate. R128 lines the ATP pocket. R147 is a substrate binding site.

It belongs to the shikimate kinase family. In terms of assembly, monomer. Mg(2+) is required as a cofactor.

Its subcellular location is the cytoplasm. The catalysed reaction is shikimate + ATP = 3-phosphoshikimate + ADP + H(+). It participates in metabolic intermediate biosynthesis; chorismate biosynthesis; chorismate from D-erythrose 4-phosphate and phosphoenolpyruvate: step 5/7. Catalyzes the specific phosphorylation of the 3-hydroxyl group of shikimic acid using ATP as a cosubstrate. The chain is Shikimate kinase from Geobacter metallireducens (strain ATCC 53774 / DSM 7210 / GS-15).